The following is a 658-amino-acid chain: Biosynthetic arginine decarboxylase (658 aa).

N6-(pyridoxal phosphate)lysine is present on lysine 127. 307–317 contacts substrate; sequence FDVGGGLGVDY.

This sequence belongs to the Orn/Lys/Arg decarboxylase class-II family. SpeA subfamily. Mg(2+) is required as a cofactor. Requires pyridoxal 5'-phosphate as cofactor.

It catalyses the reaction L-arginine + H(+) = agmatine + CO2. It participates in amine and polyamine biosynthesis; agmatine biosynthesis; agmatine from L-arginine: step 1/1. Catalyzes the biosynthesis of agmatine from arginine. The chain is Biosynthetic arginine decarboxylase from Salmonella typhi.